A 760-amino-acid polypeptide reads, in one-letter code: Catecholate siderophore receptor Fiu (760 aa).

An N-terminal signal peptide occupies residues 1–31; it reads MENNRNFPARQFHSLTFFAGLCIGITPVAQA. Positions 67-175 constitute a TBDR plug domain; that stretch reads PVADTTRTMT…PTGSINMISK (109 aa). One can recognise a TBDR beta-barrel domain in the interval 180 to 760; sequence DSGIDASASI…TFLLTANMHF (581 aa). Residues 743–760 carry the TonB C-terminal box motif; the sequence is RYHPGEPRTFLLTANMHF.

The protein belongs to the TonB-dependent receptor family.

Its subcellular location is the cell outer membrane. Its function is as follows. Involved in the active transport across the outer membrane of iron complexed with catecholate siderophores such as dihydroxybenzoylserine and dihydroxybenzoate. It derives its energy for transport by interacting with the trans-periplasmic membrane protein TonB. Can also transport catechol-substituted cephalosporins. Receptor for microcins M, H47 and E492. This is Catecholate siderophore receptor Fiu (fiu) from Escherichia coli O157:H7.